The following is a 452-amino-acid chain: Eukaryotic translation initiation factor 4B3 (452 aa).

Ala-2 carries the N-acetylalanine modification. The disordered stretch occupies residues 20–282 (EEHEAELKQQ…PSGGSRPRLV (263 aa)). A compositionally biased stretch (polar residues) spans 28–37 (QQPSPTNQKS). Basic and acidic residues predominate over residues 98-110 (PRERSAEELDRSK). Positions 111-122 (LGGGFRSYGGGR) are enriched in gly residues. Positions 126–136 (ESSSSRWGSSR) are enriched in low complexity. The segment covering 137 to 156 (VSEDGERRGGGFNRDREPSR) has biased composition (basic and acidic residues). 2 short sequence motifs (nuclear localization signal) span residues 172–179 (AKKPISGN) and 215–222 (PRRFVSSN). Residues 227-243 (DRFEKRGSFESLSRNRD) are compositionally biased toward basic and acidic residues. Residues Ser-234, Ser-270, and Ser-300 each carry the phosphoserine modification. The span at 265 to 280 (GAANGSPPPSGGSRPR) shows a compositional bias: low complexity. The disordered stretch occupies residues 349–452 (AAMEKPNEKS…AKKEETEDKI (104 aa)). Residues 369-386 (GRKDEERIERSWRKSTEH) are compositionally biased toward basic and acidic residues. Residues 387–397 (SEEDAQEEEPA) show a composition bias toward acidic residues. Composition is skewed to basic and acidic residues over residues 400–419 (GAKKEETEDKPAVEEAKKEE) and 441–452 (EEAKKEETEDKI).

It belongs to the eIF-4 subunit B family. In terms of assembly, homodimer. Nonspherical monomer. mRNA-discriminating component of initiation complexes. Interacts with MAD2. In terms of processing, phosphorylated.

The protein resides in the nucleus. Functionally, promotes the eIF4F and eIF4A RNA-dependent ATP-hydrolysis activity with different efficiency depending on mRNAs, thus providing mRNA discrimination during initiation of translation. This Arabidopsis thaliana (Mouse-ear cress) protein is Eukaryotic translation initiation factor 4B3.